Reading from the N-terminus, the 444-residue chain is MTRSLHIVGAGMAGSEAAWQAAEMGVPVVLHEMRPRVGTFAHRTGQFAEMVCSNSFRSDDDERNAVGLLHWEMRAARGLIMEMASAHRLPAGGALAVDRDPFAESVTARLREHPLISVVDEELAELPSDGDWIIATGPLTSSSLAESIRAVTGAQSLAFFDAIAPIVYAESIDMSVAWRQSRYDKGETEDERTAYINCPMTRDQYEAFIDALLAAEKTEFHEGETAGYFDGCLPIEVMAERGRETLRHGPMKPVGLTNAHKPQDKAHAVVQLRRDNKLGTLYNIVGFQTKMKYGAQTSVFRMIPGLENASFARLGGIHRNTFLNSPTLLDDRMRLKLRPNIRFAGQVTGVEGYVESAAMGLLAGRMAAAEILGRDLPPPPPETAMGALITHITGGAEAKTFQPMNVNFGLFPPIDARGGRRGRKDRYKAYTHRAKAAFTEWLAA.

9–14 lines the FAD pocket; sequence GAGMAG.

The protein belongs to the MnmG family. TrmFO subfamily. The cofactor is FAD.

The protein localises to the cytoplasm. The enzyme catalyses uridine(54) in tRNA + (6R)-5,10-methylene-5,6,7,8-tetrahydrofolate + NADH + H(+) = 5-methyluridine(54) in tRNA + (6S)-5,6,7,8-tetrahydrofolate + NAD(+). It catalyses the reaction uridine(54) in tRNA + (6R)-5,10-methylene-5,6,7,8-tetrahydrofolate + NADPH + H(+) = 5-methyluridine(54) in tRNA + (6S)-5,6,7,8-tetrahydrofolate + NADP(+). Functionally, catalyzes the folate-dependent formation of 5-methyl-uridine at position 54 (M-5-U54) in all tRNAs. This chain is Methylenetetrahydrofolate--tRNA-(uracil-5-)-methyltransferase TrmFO, found in Cereibacter sphaeroides (strain ATCC 17025 / ATH 2.4.3) (Rhodobacter sphaeroides).